Here is an 80-residue protein sequence, read N- to C-terminus: Defensin-like protein 18 (80 aa).

The N-terminal stretch at 1–29 is a signal peptide; sequence MAKFCTTITLILVALVLFADFEAPTIVKA. Cystine bridges form between Cys-32/Cys-80, Cys-43/Cys-64, Cys-49/Cys-74, and Cys-53/Cys-76.

This sequence belongs to the DEFL family.

It is found in the secreted. Functionally, confers broad-spectrum resistance to pathogens. The protein is Defensin-like protein 18 (PDF1.5) of Arabidopsis thaliana (Mouse-ear cress).